We begin with the raw amino-acid sequence, 280 residues long: Protease HtpX (280 aa).

The next 2 helical transmembrane spans lie at 7 to 26 (TFIL…GLLG) and 30 to 49 (GMLV…YWYS). H129 serves as a coordination point for Zn(2+). Residue E130 is part of the active site. Residue H133 coordinates Zn(2+). 2 helical membrane passes run 146 to 166 (ATIA…SMFG) and 178 to 198 (VVGM…QMAI). E203 is a Zn(2+) binding site.

It belongs to the peptidase M48B family. Zn(2+) serves as cofactor.

It is found in the cell inner membrane. The protein is Protease HtpX of Legionella pneumophila (strain Corby).